The following is a 539-amino-acid chain: Chaperonin GroEL (539 aa).

ATP contacts are provided by residues 29-32, 86-90, glycine 413, 476-478, and aspartate 492; these read TLGP, DGTTT, and NAA.

It belongs to the chaperonin (HSP60) family. As to quaternary structure, forms a cylinder of 14 subunits composed of two heptameric rings stacked back-to-back. Interacts with the co-chaperonin GroES.

Its subcellular location is the cytoplasm. It carries out the reaction ATP + H2O + a folded polypeptide = ADP + phosphate + an unfolded polypeptide.. Its function is as follows. Together with its co-chaperonin GroES, plays an essential role in assisting protein folding. The GroEL-GroES system forms a nano-cage that allows encapsulation of the non-native substrate proteins and provides a physical environment optimized to promote and accelerate protein folding. This is Chaperonin GroEL from Streptococcus thermophilus (strain CNRZ 1066).